Consider the following 149-residue polypeptide: MGLEKSLILLPLLVLVLAWVQPSLGKETPAMKFERQHMDSAGSSSSSPTYCNQMMKRREMTKGSCKRVNTFVHEPLADVQAVCSQKNVTCKNGKKNCYKSRSALTITDCRLKGNSKYPDCDYQTSHQQKHIIVACEGSPYVPVHFDASV.

A signal peptide spans 1–25 (MGLEKSLILLPLLVLVLAWVQPSLG). Substrate is bound by residues Lys-32 and Arg-35. The active-site Proton acceptor is the His-37. 4 disulfides stabilise this stretch: Cys-51-Cys-109, Cys-65-Cys-120, Cys-83-Cys-135, and Cys-90-Cys-97. Substrate is bound at residue 66–70 (KRVNT). N-linked (GlcNAc...) asparagine glycosylation occurs at Asn-87. Substrate contacts are provided by Lys-91 and Arg-110. Residue His-144 is the Proton donor of the active site.

This sequence belongs to the pancreatic ribonuclease family. As to quaternary structure, monomer. Interacts with and forms tight 1:1 complexes with RNH1. Dimerization of two such complexes may occur. Interaction with RNH1 inhibits this protein. Pancreas.

It is found in the secreted. The catalysed reaction is an [RNA] containing cytidine + H2O = an [RNA]-3'-cytidine-3'-phosphate + a 5'-hydroxy-ribonucleotide-3'-[RNA].. It catalyses the reaction an [RNA] containing uridine + H2O = an [RNA]-3'-uridine-3'-phosphate + a 5'-hydroxy-ribonucleotide-3'-[RNA].. Its function is as follows. Endonuclease that catalyzes the cleavage of RNA on the 3' side of pyrimidine nucleotides. Acts on single-stranded and double-stranded RNA. The sequence is that of Ribonuclease pancreatic (RNASE1) from Acomys cahirinus (Cairo spiny mouse).